Here is a 214-residue protein sequence, read N- to C-terminus: MATGFCSSFGLLVVLLLKNVADVGAFPSVPLFSLFTNAVSRAQYIHMLAADTYRDYERTYITDEQRHSNKNSHVVSCYSETIPYPTDKDNTHQKSDLELLRFSLNLIQSWLNPVQALNKVFSNNLVFGSSDVYERLKYLEEGIQALMQELEDGSFRSFPFLRPPYERFDINLRSDDALVKVYGLLSCFKKDMHKVETYLKVMKCRRFVESNCTI.

The signal sequence occupies residues Met1–Ala25. Disulfide bonds link Cys77/Cys187 and Cys204/Cys212.

This sequence belongs to the somatotropin/prolactin family.

It localises to the secreted. Its function is as follows. Growth hormone plays an important role in growth control. This chain is Somatotropin-A (gh-a), found in Xenopus laevis (African clawed frog).